We begin with the raw amino-acid sequence, 690 residues long: Glycine--tRNA ligase beta subunit (690 aa).

This sequence belongs to the class-II aminoacyl-tRNA synthetase family. In terms of assembly, tetramer of two alpha and two beta subunits.

Its subcellular location is the cytoplasm. It carries out the reaction tRNA(Gly) + glycine + ATP = glycyl-tRNA(Gly) + AMP + diphosphate. The sequence is that of Glycine--tRNA ligase beta subunit from Syntrophus aciditrophicus (strain SB).